The chain runs to 378 residues: Erythronate-4-phosphate dehydrogenase (378 aa).

2 residues coordinate substrate: S45 and T66. Residues D146 and T175 each contribute to the NAD(+) site. Residue R208 is part of the active site. D232 contributes to the NAD(+) binding site. E237 is an active-site residue. Catalysis depends on H254, which acts as the Proton donor. G257 provides a ligand contact to NAD(+). Position 258 (Y258) interacts with substrate.

This sequence belongs to the D-isomer specific 2-hydroxyacid dehydrogenase family. PdxB subfamily. Homodimer.

Its subcellular location is the cytoplasm. It catalyses the reaction 4-phospho-D-erythronate + NAD(+) = (R)-3-hydroxy-2-oxo-4-phosphooxybutanoate + NADH + H(+). It participates in cofactor biosynthesis; pyridoxine 5'-phosphate biosynthesis; pyridoxine 5'-phosphate from D-erythrose 4-phosphate: step 2/5. Its function is as follows. Catalyzes the oxidation of erythronate-4-phosphate to 3-hydroxy-2-oxo-4-phosphonooxybutanoate. The protein is Erythronate-4-phosphate dehydrogenase of Escherichia coli (strain K12 / MC4100 / BW2952).